The sequence spans 92 residues: LYR motif-containing protein 4A (92 aa).

It belongs to the complex I LYR family.

The protein is LYR motif-containing protein 4A (lyrm4a) of Salmo salar (Atlantic salmon).